The chain runs to 431 residues: MFWRRLRPGAQDLAPKGLPGDGDFRRSSDPRLPKLTPPALRAALGARGSGDWRIPGGGAAWWPEGDAKPGVGVGRLPPRLPALLTATRRAVRKRGLLRSLLPPPLLSAGASRESAPRQPGPGERERPRRRVAREDPDFLGAFLGELLPSRFREFLHQLQEKCAEEPEPLTSPAPQHQRGVLEHCPGSPRCPNCSFLPDLWGQSSHLQDSLTKISLQQTPILGPLKGDHSQFTTVRKANHRPHGAQVPRLKAALTHNPSGEGSRPCRQRCPFRVRFADETLQDTTLRYWERRRSVQQSVIVNQKAALPVASERVFGSVGKRLESLPKALYPGAKEETLASSSCWDCAGLSTQKTQGYLSEDTSMNSSLPFCSWKKAAAQRPRSSLRAFLDPHRNLEQESLLPNRVLQSVLKQGCPKGYHLLLASATLQPDKR.

Disordered regions lie at residues 1-37 (MFWR…KLTP) and 102-132 (PPPL…RRVA). A compositionally biased stretch (basic and acidic residues) spans 22 to 32 (GDFRRSSDPRL). Residues 106–121 (LSAGASRESAPRQPGP) are compositionally biased toward low complexity. Basic and acidic residues predominate over residues 122-132 (GERERPRRRVA).

It is found in the cytoplasm. This is an uncharacterized protein from Homo sapiens (Human).